Here is an 809-residue protein sequence, read N- to C-terminus: TPR repeat-containing protein TP_0920 (809 aa).

Residues proline 103–serine 125 form a disordered region. TPR repeat units follow at residues leucine 315–cysteine 348, alanine 383–glutamine 416, leucine 418–glutamine 450, threonine 471–aspartate 504, leucine 513–cysteine 550, leucine 552–asparagine 582, glycine 583–glutamate 616, glycine 656–asparagine 689, and alanine 723–cysteine 756.

This is TPR repeat-containing protein TP_0920 from Treponema pallidum (strain Nichols).